Here is a 437-residue protein sequence, read N- to C-terminus: Adenosylhomocysteinase (437 aa).

Substrate contacts are provided by Thr54, Asp125, and Glu170. 171–173 is an NAD(+) binding site; the sequence is TTT. Substrate is bound by residues Lys200 and Asp204. NAD(+) is bound by residues Asn205, 234-239, Glu258, Asn293, 314-316, and Asn361; these read GYGWVG and AGH.

Belongs to the adenosylhomocysteinase family. Requires NAD(+) as cofactor.

The protein localises to the cytoplasm. The catalysed reaction is S-adenosyl-L-homocysteine + H2O = L-homocysteine + adenosine. It functions in the pathway amino-acid biosynthesis; L-homocysteine biosynthesis; L-homocysteine from S-adenosyl-L-homocysteine: step 1/1. May play a key role in the regulation of the intracellular concentration of adenosylhomocysteine. This is Adenosylhomocysteinase from Pyrobaculum aerophilum (strain ATCC 51768 / DSM 7523 / JCM 9630 / CIP 104966 / NBRC 100827 / IM2).